A 259-amino-acid chain; its full sequence is Probable ABC transporter permease protein RT0041 (259 aa).

5 helical membrane-spanning segments follow: residues 20-40 (VGIF…PPLY), 49-69 (LFIG…SGAV), 148-168 (VIAA…IGVM), 195-215 (LIDV…ISII), and 237-257 (AVVN…ELLF).

It belongs to the MlaE permease family.

Its subcellular location is the cell inner membrane. In terms of biological role, could be part of an ABC transporter complex. This Rickettsia typhi (strain ATCC VR-144 / Wilmington) protein is Probable ABC transporter permease protein RT0041.